A 291-amino-acid polypeptide reads, in one-letter code: Pituitary-specific positive transcription factor 1 (291 aa).

A 9aaTAD motif is present at residues 5 to 13 (PFTSTDTFI). Residues 124-198 (MDSPEIRELE…ILSKWLEEAE (75 aa)) enclose the POU-specific domain. The homeobox DNA-binding region spans 214 to 273 (KRKRRTTISIAAKDALERHFGEQNKPSSQEILRMAEELNLEKEVVRVWFCNRRQREKRVK).

This sequence belongs to the POU transcription factor family. Class-1 subfamily. Interacts with PITX1. Interacts with LHX3. Interacts with ELK1.

Its subcellular location is the nucleus. In terms of biological role, transcription factor involved in the specification of the lactotrope, somatotrope, and thyrotrope phenotypes in the developing anterior pituitary. Activates growth hormone and prolactin genes. Specifically binds to the consensus sequence 5'-TAAAT-3'. In Bos taurus (Bovine), this protein is Pituitary-specific positive transcription factor 1 (POU1F1).